A 586-amino-acid chain; its full sequence is MATATPVPPRMGSRAGGPTTPLSPTRLSRLQEKEELRELNDRLAVYIDKVRSLETENSALQLQVTEREEVRGRELTGLKALYETELADARRALDDTARERAKLQIELGKCKAEHDQLLLNYAKKESDLNGAQIKLREYEAALNSKDAALATALGDKKSLEGDLEDLKDQIAQLEASLAAAKKQLADETLLKVDLENRCQSLTEDLEFRKSMYEEEINETRRKHETRLVEVDSGRQIEYEYKLAQALHEMREQHDAQVRLYKEELEQTYHAKLENARLSSEMNTSTVNSAREELMESRMRIESLSSQLSNLQKESRACLERIQELEDLLAKEKDNSRRMLTDKEREMAEIRDQMQQQLNDYEQLLDVKLALDMEISAYRKLLEGEEERLKLSPSPSSRVTVSRASSSRSVRTTRGKRKRVDVEESEASSSVSISHSASATGNVCIEEIDVDGKFIRLKNTSEQDQPMGGWEMIRKIGDTSVSYKYTSRYVLKAGQTVTIWAANAGVTASPPTDLIWKNQNSWGTGEDVKVILKNSQGEEVAQRSTVFKTTIPEEEEEEEEAAGVVVEEELFHQQGTPRASNRSCAIM.

Positions 1-31 (MATATPVPPRMGSRAGGPTTPLSPTRLSRLQ) are disordered. A2 carries the post-translational modification N-acetylalanine. Positions 2 to 34 (ATATPVPPRMGSRAGGPTTPLSPTRLSRLQEKE) are head. Residues T3 and T5 each carry the phosphothreonine modification. Residue R14 is modified to Omega-N-methylarginine. T20 carries the post-translational modification Phosphothreonine. S23 carries the phosphoserine modification. T25 is modified (phosphothreonine). A Phosphoserine modification is found at S28. Positions 32-388 (EKEELRELND…KLLEGEEERL (357 aa)) constitute an IF rod domain. The tract at residues 35-69 (ELRELNDRLAVYIDKVRSLETENSALQLQVTEREE) is coil 1A. A linker 1 region spans residues 70–81 (VRGRELTGLKAL). The segment at 82-215 (YETELADARR…EFRKSMYEEE (134 aa)) is coil 1B. K102 is covalently cross-linked (Glycyl lysine isopeptide (Lys-Gly) (interchain with G-Cter in SUMO2)). Position 111 is an N6-acetyllysine (K111). A Glycyl lysine isopeptide (Lys-Gly) (interchain with G-Cter in SUMO2) cross-link involves residue K123. Position 126 is a phosphoserine (S126). K145 participates in a covalent cross-link: Glycyl lysine isopeptide (Lys-Gly) (interchain with G-Cter in SUMO2). The residue at position 157 (K157) is an N6-acetyllysine; alternate. A Glycyl lysine isopeptide (Lys-Gly) (interchain with G-Cter in SUMO2); alternate cross-link involves residue K157. Phosphoserine is present on S158. Residue K181 forms a Glycyl lysine isopeptide (Lys-Gly) (interchain with G-Cter in SUMO2) linkage. Phosphoserine is present on residues S200, S210, and S232. The segment at 216-243 (INETRRKHETRLVEVDSGRQIEYEYKLA) is linker 2. Residues K241 and K261 each participate in a glycyl lysine isopeptide (Lys-Gly) (interchain with G-Cter in SUMO2) cross-link. Residues 244–386 (QALHEMREQH…YRKLLEGEEE (143 aa)) are coil 2. K271 carries the N6-acetyllysine; alternate modification. A Glycyl lysine isopeptide (Lys-Gly) (interchain with G-Cter in SUMO2); alternate cross-link involves residue K271. Phosphoserine occurs at positions 278 and 302. K312 participates in a covalent cross-link: Glycyl lysine isopeptide (Lys-Gly) (interchain with G-Cter in SUMO2). K330 carries the N6-acetyllysine; alternate modification. A Glycyl lysine isopeptide (Lys-Gly) (interchain with G-Cter in SUMO2); alternate cross-link involves residue K330. Phosphoserine occurs at positions 375 and 393. Positions 387 to 586 (RLKLSPSPSS…RASNRSCAIM (200 aa)) are tail. Positions 388 to 432 (LKLSPSPSSRVTVSRASSSRSVRTTRGKRKRVDVEESEASSSVSI) are disordered. Residues 390–409 (LSPSPSSRVTVSRASSSRSV) show a composition bias toward low complexity. T399 is a glycosylation site (O-linked (GlcNAc) threonine). Omega-N-methylarginine is present on R413. Positions 415–420 (KRKRVD) match the Nuclear localization signal motif. In terms of domain architecture, LTD spans 430–546 (VSISHSASAT…EEVAQRSTVF (117 aa)). The residue at position 483 (K483) is an N6-acetyllysine. K532 is covalently cross-linked (Glycyl lysine isopeptide (Lys-Gly) (interchain with G-Cter in SUMO2)). S534 carries the phosphoserine modification. A Glycyl lysine isopeptide (Lys-Gly) (interchain with G-Cter in SUMO2) cross-link involves residue K547. The residue at position 575 (T575) is a Phosphothreonine. C583 is subject to Cysteine methyl ester. The S-farnesyl cysteine moiety is linked to residue C583. Residues 584-586 (AIM) constitute a propeptide, removed in mature form.

This sequence belongs to the intermediate filament family. As to quaternary structure, homodimer. Lamin dimers then assemble into dimeric head-to-tail polymers. Ultimately, two head-to-tail polymers assemble laterally into a protofilament with a uniformly shaped rod of 3.5 nm in diameter. Interacts with SPAG4 and SEPT12. Post-translationally, B-type lamins undergo a series of modifications, such as farnesylation and phosphorylation. Increased phosphorylation of the lamins occurs before envelope disintegration and probably plays a role in regulating lamin associations. In terms of processing, phosphorylation plays a key role in lamin organization, subcellular localization and nuclear envelope disintegration. Phosphorylation by CDK1 at Ser-23 and Ser-393 at the onset of mitosis drives lamin disassembly and nuclear envelope breakdown.

Its subcellular location is the nucleus lamina. In terms of biological role, lamins are intermediate filament proteins that assemble into a filamentous meshwork, and which constitute the major components of the nuclear lamina, a fibrous layer on the nucleoplasmic side of the inner nuclear membrane. Lamins provide a framework for the nuclear envelope, bridging the nuclear envelope and chromatin, thereby playing an important role in nuclear assembly, chromatin organization, nuclear membrane and telomere dynamics. The structural integrity of the lamina is strictly controlled by the cell cycle, as seen by the disintegration and formation of the nuclear envelope in prophase and telophase, respectively. In Homo sapiens (Human), this protein is Lamin-B1 (LMNB1).